A 622-amino-acid chain; its full sequence is Fanconi anemia group G protein (622 aa).

Residue Ser7 is modified to Phosphoserine. 4 TPR repeats span residues 246–279 (VQVY…GSAW), 344–377 (SQTK…LLDS), 453–486 (SATH…LFRA), and 514–547 (AAAL…CPGN).

Belongs to the multisubunit FA complex composed of FANCA, FANCB, FANCC, FANCE, FANCF, FANCG, FANCL/PHF9 and FANCM. The complex is not found in FA patients. In complex with FANCF, FANCA and FANCL, but not with FANCC, nor FANCE, interacts with HES1; this interaction may be essential for the stability and nuclear localization of FA core complex proteins. The complex with FANCC and FANCG may also include EIF2AK2 and HSP70. When phosphorylated at Ser-7, forms a complex with BRCA2, FANCD2 and XRCC3. As to expression, highly expressed in testis and thymus. Found in lymphoblasts.

It localises to the nucleus. The protein localises to the cytoplasm. Its function is as follows. DNA repair protein that may operate in a postreplication repair or a cell cycle checkpoint function. May be implicated in interstrand DNA cross-link repair and in the maintenance of normal chromosome stability. Candidate tumor suppressor gene. This is Fanconi anemia group G protein (FANCG) from Homo sapiens (Human).